A 607-amino-acid polypeptide reads, in one-letter code: Frizzled and smoothened-like protein J (607 aa).

The first 26 residues, 1 to 26, serve as a signal peptide directing secretion; the sequence is MVSNKNLLPIIYIFFIILYFGDVAKS. The Extracellular segment spans residues 27–247; sequence QYFPLDKGAT…QWRNIYRLSD (221 aa). Residues 32 to 182 form the FZ domain; it reads DKGATCQKYR…LSYTNTCENT (151 aa). 3 disulfides stabilise this stretch: cysteine 37-cysteine 108, cysteine 50-cysteine 101, and cysteine 127-cysteine 179. Residues asparagine 63, asparagine 133, asparagine 155, asparagine 164, asparagine 190, and asparagine 222 are each glycosylated (N-linked (GlcNAc...) asparagine). Residues 248-268 traverse the membrane as a helical segment; the sequence is VLSILSCILTLFLVITLGIIN. At 269–276 the chain is on the cytoplasmic side; it reads PKVSRFDK. The chain crosses the membrane as a helical span at residues 277 to 297; it reads INVMLLSSIFLQAFSGALMTF. Asparagine 298 carries N-linked (GlcNAc...) asparagine glycosylation. The Extracellular portion of the chain corresponds to 298–330; that stretch reads NGTENTLCPEDGRFASYIDRMCVATGFLLHGSS. Residues 331–351 form a helical membrane-spanning segment; that stretch reads LLVVQWWCVLSFEVWFTIFQV. The Cytoplasmic portion of the chain corresponds to 352–358; the sequence is GKKQKDR. The chain crosses the membrane as a helical span at residues 359–379; the sequence is FIYYLVASLIIAWIPPIVSIS. Over 380–401 the chain is Extracellular; the sequence is KNEYSGGPANPFCWLTTFNYRR. Residues 402-422 form a helical membrane-spanning segment; it reads FAFWLPMGIFLCLGGVFLILL. Residues 423–451 are Cytoplasmic-facing; the sequence is MREIYVIVSGNVQSTKESRFKVLKMEAKP. A helical membrane pass occupies residues 452-472; sequence IISLIMYFSCLLYLFIYDQWI. The Extracellular portion of the chain corresponds to 473–508; the sequence is NNHMHVYTDSIPSYALCLLTSTSTNDCLLKAPDITG. The chain crosses the membrane as a helical span at residues 509 to 529; the sequence is LGYFIYSIRVFGVYAFIIYGI. The Cytoplasmic segment spans residues 530–607; it reads SKKTLQIWKY…VELDSNSDAL (78 aa). Positions 532-537 match the Lys-Thr-X-X-X-Trp motif, mediates interaction with the PDZ domain of Dvl family members motif; that stretch reads KTLQIW. Residues 559-575 are compositionally biased toward low complexity; that stretch reads TAKSSNSNNSSTTNNIS. Positions 559–607 are disordered; that stretch reads TAKSSNSNNSSTTNNISVKASSNMEYETRQENENGDSQSVELDSNSDAL. The segment covering 593 to 607 has biased composition (polar residues); it reads GDSQSVELDSNSDAL.

It belongs to the G-protein coupled receptor Fz/Smo family.

The protein localises to the membrane. This is Frizzled and smoothened-like protein J (fslJ-1) from Dictyostelium discoideum (Social amoeba).